The chain runs to 253 residues: Ribonuclease HII (253 aa).

The 192-residue stretch at 32–223 (APVAGLDEAG…FKTSGEEDRI (192 aa)) folds into the RNase H type-2 domain. Asp38, Glu39, and Asp130 together coordinate a divalent metal cation.

Belongs to the RNase HII family. It depends on Mn(2+) as a cofactor. Requires Mg(2+) as cofactor.

The protein localises to the cytoplasm. The catalysed reaction is Endonucleolytic cleavage to 5'-phosphomonoester.. Functionally, endonuclease that specifically degrades the RNA of RNA-DNA hybrids. The polypeptide is Ribonuclease HII (Chelativorans sp. (strain BNC1)).